Here is a 271-residue protein sequence, read N- to C-terminus: NADPH-dependent 7-cyano-7-deazaguanine reductase (271 aa).

Ile79–Ser81 serves as a coordination point for substrate. Ser81–Lys82 provides a ligand contact to NADPH. The active-site Thioimide intermediate is Cys178. Asp185 acts as the Proton donor in catalysis. Residue His217–Glu218 participates in substrate binding. Residue Arg246–Gly247 coordinates NADPH.

This sequence belongs to the GTP cyclohydrolase I family. QueF type 2 subfamily. Homodimer.

It is found in the cytoplasm. The enzyme catalyses 7-aminomethyl-7-carbaguanine + 2 NADP(+) = 7-cyano-7-deazaguanine + 2 NADPH + 3 H(+). It functions in the pathway tRNA modification; tRNA-queuosine biosynthesis. In terms of biological role, catalyzes the NADPH-dependent reduction of 7-cyano-7-deazaguanine (preQ0) to 7-aminomethyl-7-deazaguanine (preQ1). The chain is NADPH-dependent 7-cyano-7-deazaguanine reductase from Acinetobacter baylyi (strain ATCC 33305 / BD413 / ADP1).